Consider the following 297-residue polypeptide: uncharacterized protein (297 aa).

The next 2 membrane-spanning stretches (helical) occupy residues 17–37 (LALS…KEIF) and 48–68 (TISG…GYSI). The 180-residue stretch at 17-196 (LALSGGGFYG…TLNYPITLFD (180 aa)) folds into the PNPLA domain. Residues 21–26 (GGGFYG) carry the GXGXXG motif. The GXSXG motif lies at 51–55 (GVSVG). Ser-53 acts as the Nucleophile in catalysis. The N-linked (GlcNAc...) asparagine; by host glycan is linked to Asn-122. Asp-183 acts as the Proton acceptor in catalysis. The DGA/G motif lies at 183–185 (DGG). The N-linked (GlcNAc...) asparagine; by host glycan is linked to Asn-239.

The protein resides in the membrane. Probable lipid hydrolase. This is an uncharacterized protein from Acanthamoeba polyphaga mimivirus (APMV).